A 340-amino-acid polypeptide reads, in one-letter code: Ketol-acid reductoisomerase (NADP(+)) (340 aa).

Residues Val3 to Thr182 enclose the KARI N-terminal Rossmann domain. NADP(+)-binding positions include Tyr26 to Gln29, Arg49, Ser53, and Asp83 to Gln86. The active site involves His108. Gly134 provides a ligand contact to NADP(+). The region spanning Thr183–Val328 is the KARI C-terminal knotted domain. Asp191, Glu195, Glu227, and Glu231 together coordinate Mg(2+). Ser252 is a substrate binding site.

This sequence belongs to the ketol-acid reductoisomerase family. Mg(2+) is required as a cofactor.

The catalysed reaction is (2R)-2,3-dihydroxy-3-methylbutanoate + NADP(+) = (2S)-2-acetolactate + NADPH + H(+). The enzyme catalyses (2R,3R)-2,3-dihydroxy-3-methylpentanoate + NADP(+) = (S)-2-ethyl-2-hydroxy-3-oxobutanoate + NADPH + H(+). It participates in amino-acid biosynthesis; L-isoleucine biosynthesis; L-isoleucine from 2-oxobutanoate: step 2/4. The protein operates within amino-acid biosynthesis; L-valine biosynthesis; L-valine from pyruvate: step 2/4. Its function is as follows. Involved in the biosynthesis of branched-chain amino acids (BCAA). Catalyzes an alkyl-migration followed by a ketol-acid reduction of (S)-2-acetolactate (S2AL) to yield (R)-2,3-dihydroxy-isovalerate. In the isomerase reaction, S2AL is rearranged via a Mg-dependent methyl migration to produce 3-hydroxy-3-methyl-2-ketobutyrate (HMKB). In the reductase reaction, this 2-ketoacid undergoes a metal-dependent reduction by NADPH to yield (R)-2,3-dihydroxy-isovalerate. The sequence is that of Ketol-acid reductoisomerase (NADP(+)) from Streptococcus mutans serotype c (strain ATCC 700610 / UA159).